The following is a 544-amino-acid chain: Chaperonin GroEL (544 aa).

Residues 29-32 (TLGP), 86-90 (DGTTT), Gly413, 476-478 (NAL), and Asp492 contribute to the ATP site.

It belongs to the chaperonin (HSP60) family. In terms of assembly, forms a cylinder of 14 subunits composed of two heptameric rings stacked back-to-back. Interacts with the co-chaperonin GroES.

The protein resides in the cytoplasm. The enzyme catalyses ATP + H2O + a folded polypeptide = ADP + phosphate + an unfolded polypeptide.. Functionally, together with its co-chaperonin GroES, plays an essential role in assisting protein folding. The GroEL-GroES system forms a nano-cage that allows encapsulation of the non-native substrate proteins and provides a physical environment optimized to promote and accelerate protein folding. This chain is Chaperonin GroEL, found in Desulfitobacterium hafniense (strain Y51).